The sequence spans 382 residues: Mannitol-1-phosphate 5-dehydrogenase (382 aa).

NAD(+) is bound at residue 3–14 (ALHFGAGNIGRG).

Belongs to the mannitol dehydrogenase family.

It carries out the reaction D-mannitol 1-phosphate + NAD(+) = beta-D-fructose 6-phosphate + NADH + H(+). The polypeptide is Mannitol-1-phosphate 5-dehydrogenase (Salmonella dublin (strain CT_02021853)).